The primary structure comprises 292 residues: RNA 5'-monophosphate methyltransferase (292 aa).

The disordered stretch occupies residues 1-20 (MAVPTELHGGSVKETAAEKE). S-adenosyl-L-methionine-binding positions include Arg46, Asn76, Asp110, 135 to 136 (DF), and Met164. In terms of domain architecture, Bin3-type SAM spans 53 to 274 (ELLRQLFPES…KQTIETHPIP (222 aa)).

Belongs to the methyltransferase superfamily. In terms of assembly, interacts with DICER1; the interaction may be mediated by RNA.

The protein localises to the cytoplasm. The enzyme catalyses a 5'-end 5'-phospho-ribonucleoside-RNA + S-adenosyl-L-methionine = a 5'-end (5'-methylphospho)-ribonucleoside-RNA + S-adenosyl-L-homocysteine. The catalysed reaction is a 5'-end 5'-phospho-ribonucleoside-RNA + 2 S-adenosyl-L-methionine = a 5'-end (5'-bismethylphospho)-ribonucleoside-RNA + 2 S-adenosyl-L-homocysteine. Functionally, O-methyltransferase that specifically monomethylates 5'-monophosphate of cytoplasmic histidyl tRNA (tRNA(His)), acting as a capping enzyme by protecting tRNA(His) from cleavage by DICER1. Also able, with less efficiently, to methylate the 5' monophosphate of a subset of pre-miRNAs, acting as a negative regulator of miRNA processing. The 5' monophosphate of pre-miRNAs is recognized by DICER1 and is required for pre-miRNAs processing: methylation at this position reduces the processing of pre-miRNAs by DICER1. Was also reported to mediate dimethylation of pre-miR-145; however dimethylation cannot be reproduced by another group which observes a monomethylation of pre-miR-145. This is RNA 5'-monophosphate methyltransferase (BCDIN3D) from Pongo abelii (Sumatran orangutan).